The sequence spans 108 residues: Anti-sigma-B factor antagonist (108 aa).

An STAS domain is found at 3–108; that stretch reads LNIETTTQDK…MHVNEGTEVE (106 aa). At Ser57 the chain carries Phosphoserine.

The protein belongs to the anti-sigma-factor antagonist family. Post-translationally, phosphorylated by RsbW on a serine residue.

In terms of biological role, positive regulator of sigma-B activity. Non-phosphorylated RsbV binds to RsbW, preventing its association with sigma-B. When phosphorylated, releases RsbW, which is then free to complex with and inactivate sigma-B. The polypeptide is Anti-sigma-B factor antagonist (rsbV) (Staphylococcus aureus (strain NCTC 8325 / PS 47)).